A 39-amino-acid polypeptide reads, in one-letter code: Potassium channel toxin alpha-KTx 2.5 (39 aa).

3 disulfide bridges follow: Cys7-Cys29, Cys13-Cys34, and Cys17-Cys36.

The protein belongs to the short scorpion toxin superfamily. Potassium channel inhibitor family. Alpha-KTx 02 subfamily. In terms of tissue distribution, expressed by the venom gland.

It localises to the secreted. In terms of biological role, potent selective inhibitor of Kv1.1/KCNA1, Kv1.2/KCNA2, Kv1.3/KCNA3 voltage-gated potassium channels. Weak inhibitor of Kv1.6/KCNA6 potassium channel. It also shows a weak interaction with nicotinic acetylcholine receptors (nAChR), suggesting it may weakly inhibit it. This is Potassium channel toxin alpha-KTx 2.5 from Centruroides limbatus (Bark scorpion).